The sequence spans 386 residues: GTPase Obg (386 aa).

One can recognise an Obg domain in the interval 4–162 (SNFVDYVKIY…RTVILQLKLL (159 aa)). Residues 18–44 (KGGRGSSHFRREKYIPKGGPDGGDGGR) are disordered. Residues 163–329 (ADVGLVGFPN…LKDLLWKELN (167 aa)) enclose the OBG-type G domain. Residues 169-176 (GFPNAGKS), 194-198 (FTTLE), 216-219 (DIPG), 283-286 (TKSD), and 310-312 (SSI) contribute to the GTP site. Residues Ser176 and Thr196 each coordinate Mg(2+). The segment at 357–386 (YIFPVDEDEDDPDEEYEEYWDDDEDEDTRK) is disordered.

The protein belongs to the TRAFAC class OBG-HflX-like GTPase superfamily. OBG GTPase family. As to quaternary structure, monomer. It depends on Mg(2+) as a cofactor.

Its subcellular location is the cytoplasm. In terms of biological role, an essential GTPase which binds GTP, GDP and possibly (p)ppGpp with moderate affinity, with high nucleotide exchange rates and a fairly low GTP hydrolysis rate. Plays a role in control of the cell cycle, stress response, ribosome biogenesis and in those bacteria that undergo differentiation, in morphogenesis control. The protein is GTPase Obg of Parabacteroides distasonis (strain ATCC 8503 / DSM 20701 / CIP 104284 / JCM 5825 / NCTC 11152).